Reading from the N-terminus, the 489-residue chain is uncharacterized protein (489 aa).

4 disordered regions span residues 1–94 (MIEE…GSLD), 109–229 (NRNQ…SDDD), 300–389 (DDNI…TSIQ), and 428–461 (SESG…TLVK). Low complexity-rich tracts occupy residues 43 to 53 (LLVQQSNQSVK) and 64 to 77 (SNGF…NIHD). A compositionally biased stretch (acidic residues) spans 121-138 (NFSEDDEDDDAEDDDSSD). Residues 144 to 154 (KKNKPKKPSKL) show a composition bias toward basic residues. Over residues 155–164 (MKHDSVDGKN) the composition is skewed to basic and acidic residues. A compositionally biased stretch (basic residues) spans 173–199 (SKKKVQHQLKEKNKKKGIKNDKKKSKP). Positions 308–343 (NDNDNDNDDDNDNDNDNDNDNDNDNDDDENGEDNGE) are enriched in acidic residues. Composition is skewed to low complexity over residues 344–389 (DLNI…TSIQ) and 433–449 (SISS…SSKS).

This is an uncharacterized protein from Dictyostelium discoideum (Social amoeba).